The following is a 120-amino-acid chain: Putative monooxygenase GME11364 (120 aa).

Residues 9-99 (VSVHIRLTVD…ILLKPHEVEL (91 aa)) enclose the ABM domain.

The protein belongs to the LsrG family.

The protein operates within secondary metabolite biosynthesis. Putative monooxygenase; part of the gene cluster that mediates the biosynthesis of dibenzodioxocinones such as pestalotiollide B, a novel class of inhibitors against cholesterol ester transfer protein (CEPT). The biosynthesis initiates from condensation of acetate and malonate units catalyzed by the non-reducing PKS pks8/GME11356. Pks8/GME11356 lacks a thioesterase (TE) domain, which is important to the cyclizing of the third ring of atrochrysone carboxylic acid, and the esterase GME11355 might play the role of TE and catalyzes the cyclization reaction of the C ring. The lactamase-like protein GME11357 (or other beta-lactamases in Pestalotiopsis microspora) probably hydrolyzes the thioester bond between the ACP of pks8/GME11356 and the intermediate to release atrochrysone carboxylic acid, which is spontaneously dehydrates to form endocrocin anthrone. Endocrocin anthrone is further converted to emodin via the endocrocin intermediate. Emodin is then oxidized by several enzymes such as the Baeyer-Villiger oxidase GME11358, the oxidoreductase GME11367, the short chain dehydrogenase/reductase GME11373, as well as by other oxidoreductases from the cluster, to modify the A and C rings and open the B ring, and finally yield monodictyphenone. The prenyltransferase GME11375 may catalyze the addition reaction between the C5 side chains and the carbon bone of dibenzodioxocinones. The remaining biochemical reactions to the final product dibenzodioxocinones should be methylation catalyzed by methyltransferase GME11366 and reduction and lactonization reaction catalyzed by a series of oxidordeuctases. The chain is Putative monooxygenase GME11364 from Pestalotiopsis microspora.